The chain runs to 460 residues: A-type ATP synthase subunit B (460 aa).

The protein belongs to the ATPase alpha/beta chains family. As to quaternary structure, has multiple subunits with at least A(3), B(3), C, D, E, F, H, I and proteolipid K(x).

Its subcellular location is the cell membrane. Its function is as follows. Component of the A-type ATP synthase that produces ATP from ADP in the presence of a proton gradient across the membrane. The B chain is a regulatory subunit. The protein is A-type ATP synthase subunit B of Methanosarcina barkeri.